We begin with the raw amino-acid sequence, 274 residues long: Nickel/cobalt efflux system RcnA (274 aa).

Residues 1–12 (MTEFTTLLQQGN) lie on the Periplasmic side of the membrane. Residues 13-33 (AWFFIPSAILLGALHGLEPGH) traverse the membrane as a helical segment. Over 34–56 (SKTMMAAFIIAIKGTIKQAVMLG) the chain is Cytoplasmic. Residues 57–77 (LAATISHTAVVWLIAFGGMVI) form a helical membrane-spanning segment. Over 78-86 (SKRFTAQSA) the chain is Periplasmic. The helical transmembrane segment at 87–107 (EPWLQLISAVIIISTAFWMFW) threads the bilayer. Residues 108-175 (RTWRGERNWL…DGREVTNWQI (68 aa)) are Cytoplasmic-facing. Residues 127–153 (HHHHDHEHHHDHGHHHHHEHGEYQDAH) are disordered. The segment covering 129–144 (HHDHEHHHDHGHHHHH) has biased composition (basic residues). A helical transmembrane segment spans residues 176–196 (LLFGLTGGLIPCPAAITVLLI). Residues 197 to 209 (CIQLKALTLGATL) lie on the Periplasmic side of the membrane. The chain crosses the membrane as a helical span at residues 210 to 230 (VVSFSIGLALTLVTVGVGAAI). The Cytoplasmic portion of the chain corresponds to 231–251 (SVQQVAKRWSGFNTLAKRAPY). A helical membrane pass occupies residues 252 to 272 (FSSLLIGLVGVYMGVHGFMGI). Residues 273–274 (MR) are Periplasmic-facing.

It belongs to the NiCoT transporter (TC 2.A.52) family. RcnA subfamily.

Its subcellular location is the cell inner membrane. Its function is as follows. Efflux system for nickel and cobalt. This is Nickel/cobalt efflux system RcnA (rcnA) from Escherichia coli (strain K12).